The sequence spans 314 residues: tRNA-cytidine(32) 2-sulfurtransferase (314 aa).

Residues 53–58 (SGGKDS) carry the PP-loop motif motif. Residues Cys128, Cys131, and Cys219 each contribute to the [4Fe-4S] cluster site.

The protein belongs to the TtcA family. In terms of assembly, homodimer. The cofactor is Mg(2+). It depends on [4Fe-4S] cluster as a cofactor.

It localises to the cytoplasm. It catalyses the reaction cytidine(32) in tRNA + S-sulfanyl-L-cysteinyl-[cysteine desulfurase] + AH2 + ATP = 2-thiocytidine(32) in tRNA + L-cysteinyl-[cysteine desulfurase] + A + AMP + diphosphate + H(+). The protein operates within tRNA modification. Its function is as follows. Catalyzes the ATP-dependent 2-thiolation of cytidine in position 32 of tRNA, to form 2-thiocytidine (s(2)C32). The sulfur atoms are provided by the cysteine/cysteine desulfurase (IscS) system. The sequence is that of tRNA-cytidine(32) 2-sulfurtransferase from Colwellia psychrerythraea (strain 34H / ATCC BAA-681) (Vibrio psychroerythus).